A 321-amino-acid polypeptide reads, in one-letter code: Lipoyl synthase (321 aa).

[4Fe-4S] cluster contacts are provided by C68, C73, C79, C94, C98, C101, and S308. Positions F80–T297 constitute a Radical SAM core domain.

This sequence belongs to the radical SAM superfamily. Lipoyl synthase family. The cofactor is [4Fe-4S] cluster.

Its subcellular location is the cytoplasm. It catalyses the reaction [[Fe-S] cluster scaffold protein carrying a second [4Fe-4S](2+) cluster] + N(6)-octanoyl-L-lysyl-[protein] + 2 oxidized [2Fe-2S]-[ferredoxin] + 2 S-adenosyl-L-methionine + 4 H(+) = [[Fe-S] cluster scaffold protein] + N(6)-[(R)-dihydrolipoyl]-L-lysyl-[protein] + 4 Fe(3+) + 2 hydrogen sulfide + 2 5'-deoxyadenosine + 2 L-methionine + 2 reduced [2Fe-2S]-[ferredoxin]. Its pathway is protein modification; protein lipoylation via endogenous pathway; protein N(6)-(lipoyl)lysine from octanoyl-[acyl-carrier-protein]: step 2/2. Functionally, catalyzes the radical-mediated insertion of two sulfur atoms into the C-6 and C-8 positions of the octanoyl moiety bound to the lipoyl domains of lipoate-dependent enzymes, thereby converting the octanoylated domains into lipoylated derivatives. The chain is Lipoyl synthase from Aliivibrio fischeri (strain ATCC 700601 / ES114) (Vibrio fischeri).